Consider the following 486-residue polypeptide: Bifunctional protein HldE (486 aa).

A ribokinase region spans residues M1–V331. N207–E210 serves as a coordination point for ATP. Residue D276 is part of the active site. The tract at residues V358–H486 is cytidylyltransferase.

The protein in the N-terminal section; belongs to the carbohydrate kinase PfkB family. It in the C-terminal section; belongs to the cytidylyltransferase family. Homodimer.

It carries out the reaction D-glycero-beta-D-manno-heptose 7-phosphate + ATP = D-glycero-beta-D-manno-heptose 1,7-bisphosphate + ADP + H(+). The enzyme catalyses D-glycero-beta-D-manno-heptose 1-phosphate + ATP + H(+) = ADP-D-glycero-beta-D-manno-heptose + diphosphate. It participates in nucleotide-sugar biosynthesis; ADP-L-glycero-beta-D-manno-heptose biosynthesis; ADP-L-glycero-beta-D-manno-heptose from D-glycero-beta-D-manno-heptose 7-phosphate: step 1/4. Its pathway is nucleotide-sugar biosynthesis; ADP-L-glycero-beta-D-manno-heptose biosynthesis; ADP-L-glycero-beta-D-manno-heptose from D-glycero-beta-D-manno-heptose 7-phosphate: step 3/4. Functionally, catalyzes the phosphorylation of D-glycero-D-manno-heptose 7-phosphate at the C-1 position to selectively form D-glycero-beta-D-manno-heptose-1,7-bisphosphate. In terms of biological role, catalyzes the ADP transfer from ATP to D-glycero-beta-D-manno-heptose 1-phosphate, yielding ADP-D-glycero-beta-D-manno-heptose. This is Bifunctional protein HldE from Koribacter versatilis (strain Ellin345).